The sequence spans 293 residues: Phosphatidylserine decarboxylase proenzyme (293 aa).

Residues aspartate 88, histidine 144, and serine 247 each act as charge relay system; for autoendoproteolytic cleavage activity in the active site. Serine 247 acts as the Schiff-base intermediate with substrate; via pyruvic acid; for decarboxylase activity in catalysis. A Pyruvic acid (Ser); by autocatalysis modification is found at serine 247.

This sequence belongs to the phosphatidylserine decarboxylase family. PSD-B subfamily. Prokaryotic type I sub-subfamily. Heterodimer of a large membrane-associated beta subunit and a small pyruvoyl-containing alpha subunit. The cofactor is pyruvate. Is synthesized initially as an inactive proenzyme. Formation of the active enzyme involves a self-maturation process in which the active site pyruvoyl group is generated from an internal serine residue via an autocatalytic post-translational modification. Two non-identical subunits are generated from the proenzyme in this reaction, and the pyruvate is formed at the N-terminus of the alpha chain, which is derived from the carboxyl end of the proenzyme. The autoendoproteolytic cleavage occurs by a canonical serine protease mechanism, in which the side chain hydroxyl group of the serine supplies its oxygen atom to form the C-terminus of the beta chain, while the remainder of the serine residue undergoes an oxidative deamination to produce ammonia and the pyruvoyl prosthetic group on the alpha chain. During this reaction, the Ser that is part of the protease active site of the proenzyme becomes the pyruvoyl prosthetic group, which constitutes an essential element of the active site of the mature decarboxylase.

The protein localises to the cell membrane. The enzyme catalyses a 1,2-diacyl-sn-glycero-3-phospho-L-serine + H(+) = a 1,2-diacyl-sn-glycero-3-phosphoethanolamine + CO2. The protein operates within phospholipid metabolism; phosphatidylethanolamine biosynthesis; phosphatidylethanolamine from CDP-diacylglycerol: step 2/2. Catalyzes the formation of phosphatidylethanolamine (PtdEtn) from phosphatidylserine (PtdSer). This is Phosphatidylserine decarboxylase proenzyme from Xylella fastidiosa (strain M23).